Consider the following 527-residue polypeptide: Cytokinin dehydrogenase 3 (527 aa).

Residues 1–22 (MEVAMVCTRVNLLILILSLCSP) form the signal peptide. Positions 52–231 (LFHSPSAVLK…TRARILLQEA (180 aa)) constitute an FAD-binding PCMH-type domain. FAD contacts are provided by Ala87, Gly89, and Gly91. Residue His92 is modified to Pros-8alpha-FAD histidine. Ser93, Gln97, Asp155, Thr160, Ser166, Ile170, and Ile221 together coordinate FAD. Residue Asn413 is glycosylated (N-linked (GlcNAc...) asparagine). FAD-binding residues include Tyr471 and Gln509.

This sequence belongs to the oxygen-dependent FAD-linked oxidoreductase family. In terms of assembly, monomer. FAD serves as cofactor. In terms of tissue distribution, expressed in inflorescence meristems. Highly expressed in lamina joints, and mainly in the parenchyma cells and vascular bundles on the abaxial side of the lamina joint. Expressed in roots, stems, leaves and young panicles.

It is found in the endoplasmic reticulum. It carries out the reaction N(6)-dimethylallyladenine + A + H2O = 3-methyl-2-butenal + adenine + AH2. In terms of biological role, catalyzes the oxidation of cytokinins, a family of N(6)-substituted adenine derivatives, where the substituent is an isopentenyl group. Cytokinins are plant hormones essential for plant growth, development, and stress responses. Exhibits specific activities toward trans-zeatin (tZ) and isopentenyladenine (iP). Plays a role in lamina joint inclination. Regulates cell proliferation and vascular bundle number on the abaxial side of lamina joint. The polypeptide is Cytokinin dehydrogenase 3 (Oryza sativa subsp. japonica (Rice)).